We begin with the raw amino-acid sequence, 116 residues long: ATP-dependent Clp protease adapter protein ClpS (116 aa).

Polar residues predominate over residues 1-11 (MRRFNTIMQGK). Residues 1–23 (MRRFNTIMQGKTNGGNGPESGTV) form a disordered region.

It belongs to the ClpS family. Binds to the N-terminal domain of the chaperone ClpA.

Involved in the modulation of the specificity of the ClpAP-mediated ATP-dependent protein degradation. In Brucella melitensis biotype 2 (strain ATCC 23457), this protein is ATP-dependent Clp protease adapter protein ClpS.